The sequence spans 914 residues: Solute carrier family 12 member 9 (914 aa).

Residues 1–36 (MASENSPLLAYRLLGEEGAAFPPNGAGGSGVASARK) lie on the Cytoplasmic side of the membrane. A Phosphoserine modification is found at S6. Residues 37–57 (LSTFLGVVVPTVLSMFSIVVF) traverse the membrane as a helical segment. At 58 to 72 (LRIGFVVGHAGLLQA) the chain is on the extracellular side. A helical membrane pass occupies residues 73–93 (LAMLLVAYVILALTVLSVCAI). The Cytoplasmic portion of the chain corresponds to 94–119 (ATNGAVRGGGAYFMISRTLGPEVGGS). A helical membrane pass occupies residues 120–140 (IGLMFYLANVCGCAVSLLGLV). Over 141-167 (ESILDVFGADVTGSSGIKVLPQGYGWN) the chain is Extracellular. Residues 168 to 188 (LLYGSLLLGLVGGVCALGAGL) form a helical membrane-spanning segment. Over 189–193 (YARAS) the chain is Cytoplasmic. A helical membrane pass occupies residues 194–214 (FLTFLLVSGSLASVLVSFVAV). Residues 215–262 (GPRNITLAPRPGTNGSSVPPRHGHFTGFNGSTLKDNLGAGYAEDYTTG) are Extracellular-facing. 3 N-linked (GlcNAc...) asparagine glycosylation sites follow: N218, N228, and N243. The helical transmembrane segment at 263–283 (AMMTFASVFAVLFNGCTGIMA) threads the bilayer. The Cytoplasmic segment spans residues 284–297 (GANMSGELKDPSRA). A helical transmembrane segment spans residues 298-318 (IPLGTIIAVAYTFFIYILLFF). At 319 to 338 (LSSFTCDRALLQGDYGFFRD) the chain is on the extracellular side. Residues 339–359 (ISLWPPLVLIGIYATALSASM) form a helical membrane-spanning segment. Over 360–376 (SSLIGASRILHALAQDD) the chain is Cytoplasmic. A helical membrane pass occupies residues 377-399 (LFGVILAPAKVVSGGGNPWGAVL). Topologically, residues 400 to 416 (YSWGLVQLVLLAGKLNT) are extracellular. A helical membrane pass occupies residues 417–437 (LAAVVTVFYLVAYAAVDLSCL). The Cytoplasmic portion of the chain corresponds to 438–466 (SLEWASAPNFRPTFSLFSWHTCLLGVASC). The chain crosses the membrane as a helical span at residues 467–487 (LLMMFLISPGAAGGSLLLMGL). Over 488 to 740 (LSALLTARGG…LLRPRGGPGY (253 aa)) the chain is Extracellular. Residues 645–678 (PAFSEPAEGTREGGSPALSTLFPPPRAPGSPRAL) are disordered. A helical membrane pass occupies residues 741–761 (VDVCGLFLLQMATILSMVPAW). Residues 762 to 914 (HSARLRIFLC…GVTPVTCTDL (153 aa)) lie on the Cytoplasmic side of the membrane. Positions 843–864 (QQGRGTGGGPGGPEGRDGEEGP) are disordered. Residues 846–855 (RGTGGGPGGP) are compositionally biased toward gly residues.

It belongs to the SLC12A transporter family. Interacts with SLC12A1.

Its subcellular location is the cell membrane. The protein resides in the lysosome membrane. In terms of biological role, may be an inhibitor of SLC12A1. Seems to correspond to a subunit of a multimeric transport system and thus, additional subunits may be required for its function. May play a role in lysosomal ion flux and osmoregulation. This is Solute carrier family 12 member 9 (Slc12a9) from Rattus norvegicus (Rat).